The chain runs to 542 residues: CTP synthase (542 aa).

Residues 1 to 265 (MTRFIFITGG…DTQVLKFFGM (265 aa)) form an amidoligase domain region. Ser-13 contacts CTP. Position 13 (Ser-13) interacts with UTP. Residue 14–19 (SLGKGL) participates in ATP binding. Tyr-54 is an L-glutamine binding site. Residue Asp-71 coordinates ATP. Mg(2+) contacts are provided by Asp-71 and Glu-139. Residues 146–148 (DIE), 186–191 (KTKPTQ), and Lys-222 contribute to the CTP site. Residues 186–191 (KTKPTQ) and Lys-222 contribute to the UTP site. In terms of domain architecture, Glutamine amidotransferase type-1 spans 291-541 (TIAVVGKYTS…IRAAIEQSRL (251 aa)). Gly-353 provides a ligand contact to L-glutamine. The active-site Nucleophile; for glutamine hydrolysis is the Cys-380. L-glutamine contacts are provided by residues 381-384 (FGMQ), Glu-404, and Arg-469. Residues His-514 and Glu-516 contribute to the active site.

Belongs to the CTP synthase family. Homotetramer.

The catalysed reaction is UTP + L-glutamine + ATP + H2O = CTP + L-glutamate + ADP + phosphate + 2 H(+). It carries out the reaction L-glutamine + H2O = L-glutamate + NH4(+). The enzyme catalyses UTP + NH4(+) + ATP = CTP + ADP + phosphate + 2 H(+). It participates in pyrimidine metabolism; CTP biosynthesis via de novo pathway; CTP from UDP: step 2/2. Its activity is regulated as follows. Allosterically activated by GTP, when glutamine is the substrate; GTP has no effect on the reaction when ammonia is the substrate. The allosteric effector GTP functions by stabilizing the protein conformation that binds the tetrahedral intermediate(s) formed during glutamine hydrolysis. Inhibited by the product CTP, via allosteric rather than competitive inhibition. Its function is as follows. Catalyzes the ATP-dependent amination of UTP to CTP with either L-glutamine or ammonia as the source of nitrogen. Regulates intracellular CTP levels through interactions with the four ribonucleotide triphosphates. This is CTP synthase from Rhodospirillum centenum (strain ATCC 51521 / SW).